The following is a 382-amino-acid chain: MPQRHPQPAHPADGVYFGLMSGTSMDGVDGVAVRFETGRAPVVLAEAFVGFAQSLRDALFALQQPGDDEIDRESVAANALVARYAVCCHELQRTAGLSRDDVRAIGVHGQTVRHRPERGYTRQLNNPALLAELTHVDVIADFRMRDVAAGGHGAPLAPAFHATVFGAPGDTRVVCNLGGISNITILPAEGSDVRGFDCGPANALIDAWATRQLGKPYDDGGKFAARGTVHAALLDALLDEPYFTAPPPKSTGRDLFSAAWLDAKLAGFAQVAPEDVQATLTALTAVSVAREIARHAAGCKAVFVCGGGARNPVLLDALRRALQEAGVLATVDTTAALGVPPQQVEALAFAWLAYRFTARLPGNLASVTGAAGERVLGALYPR.

22–29 provides a ligand contact to ATP; sequence GTSMDGVD.

This sequence belongs to the anhydro-N-acetylmuramic acid kinase family.

The enzyme catalyses 1,6-anhydro-N-acetyl-beta-muramate + ATP + H2O = N-acetyl-D-muramate 6-phosphate + ADP + H(+). It participates in amino-sugar metabolism; 1,6-anhydro-N-acetylmuramate degradation. The protein operates within cell wall biogenesis; peptidoglycan recycling. Its function is as follows. Catalyzes the specific phosphorylation of 1,6-anhydro-N-acetylmuramic acid (anhMurNAc) with the simultaneous cleavage of the 1,6-anhydro ring, generating MurNAc-6-P. Is required for the utilization of anhMurNAc either imported from the medium or derived from its own cell wall murein, and thus plays a role in cell wall recycling. In Burkholderia vietnamiensis (strain G4 / LMG 22486) (Burkholderia cepacia (strain R1808)), this protein is Anhydro-N-acetylmuramic acid kinase.